Consider the following 360-residue polypeptide: Histidinol-phosphate aminotransferase (360 aa).

The residue at position 222 (lysine 222) is an N6-(pyridoxal phosphate)lysine.

It belongs to the class-II pyridoxal-phosphate-dependent aminotransferase family. Histidinol-phosphate aminotransferase subfamily. In terms of assembly, homodimer. Requires pyridoxal 5'-phosphate as cofactor.

It carries out the reaction L-histidinol phosphate + 2-oxoglutarate = 3-(imidazol-4-yl)-2-oxopropyl phosphate + L-glutamate. It participates in amino-acid biosynthesis; L-histidine biosynthesis; L-histidine from 5-phospho-alpha-D-ribose 1-diphosphate: step 7/9. This chain is Histidinol-phosphate aminotransferase, found in Listeria welshimeri serovar 6b (strain ATCC 35897 / DSM 20650 / CCUG 15529 / CIP 8149 / NCTC 11857 / SLCC 5334 / V8).